The chain runs to 327 residues: Mycothiol acetyltransferase (327 aa).

N-acetyltransferase domains are found at residues 11-159 (EPHG…VTLP) and 162-327 (VQIR…EGTS). Position 42 (Glu-42) interacts with 1D-myo-inositol 2-(L-cysteinylamino)-2-deoxy-alpha-D-glucopyranoside. 89-91 (LVI) is an acetyl-CoA binding site. 1D-myo-inositol 2-(L-cysteinylamino)-2-deoxy-alpha-D-glucopyranoside-binding residues include Glu-189, Lys-228, and Glu-251. Acetyl-CoA-binding positions include 255 to 257 (LGV) and 262 to 268 (QGLGLGR). Tyr-289 provides a ligand contact to 1D-myo-inositol 2-(L-cysteinylamino)-2-deoxy-alpha-D-glucopyranoside. Acetyl-CoA is bound at residue 294–299 (NAPAIR).

This sequence belongs to the acetyltransferase family. MshD subfamily. As to quaternary structure, monomer.

The enzyme catalyses 1D-myo-inositol 2-(L-cysteinylamino)-2-deoxy-alpha-D-glucopyranoside + acetyl-CoA = mycothiol + CoA + H(+). In terms of biological role, catalyzes the transfer of acetyl from acetyl-CoA to desacetylmycothiol (Cys-GlcN-Ins) to form mycothiol. This is Mycothiol acetyltransferase from Acidothermus cellulolyticus (strain ATCC 43068 / DSM 8971 / 11B).